A 333-amino-acid chain; its full sequence is Ketol-acid reductoisomerase (NADP(+)) (333 aa).

One can recognise a KARI N-terminal Rossmann domain in the interval 2–182 (AELFYDADAD…GGTRAGVIKT (181 aa)). NADP(+) is bound by residues 25-28 (YGSQ), Ser-51, Ser-53, and 83-86 (DPIQ). The active site involves His-108. Gly-134 is an NADP(+) binding site. In terms of domain architecture, KARI C-terminal knotted spans 183 to 328 (TFTEETETDL…KELRKLMSWV (146 aa)). 4 residues coordinate Mg(2+): Asp-191, Glu-195, Glu-227, and Glu-231. Substrate is bound at residue Ser-252.

The protein belongs to the ketol-acid reductoisomerase family. It depends on Mg(2+) as a cofactor.

The enzyme catalyses (2R)-2,3-dihydroxy-3-methylbutanoate + NADP(+) = (2S)-2-acetolactate + NADPH + H(+). The catalysed reaction is (2R,3R)-2,3-dihydroxy-3-methylpentanoate + NADP(+) = (S)-2-ethyl-2-hydroxy-3-oxobutanoate + NADPH + H(+). It participates in amino-acid biosynthesis; L-isoleucine biosynthesis; L-isoleucine from 2-oxobutanoate: step 2/4. Its pathway is amino-acid biosynthesis; L-valine biosynthesis; L-valine from pyruvate: step 2/4. In terms of biological role, involved in the biosynthesis of branched-chain amino acids (BCAA). Catalyzes an alkyl-migration followed by a ketol-acid reduction of (S)-2-acetolactate (S2AL) to yield (R)-2,3-dihydroxy-isovalerate. In the isomerase reaction, S2AL is rearranged via a Mg-dependent methyl migration to produce 3-hydroxy-3-methyl-2-ketobutyrate (HMKB). In the reductase reaction, this 2-ketoacid undergoes a metal-dependent reduction by NADPH to yield (R)-2,3-dihydroxy-isovalerate. This chain is Ketol-acid reductoisomerase (NADP(+)), found in Streptomyces avermitilis (strain ATCC 31267 / DSM 46492 / JCM 5070 / NBRC 14893 / NCIMB 12804 / NRRL 8165 / MA-4680).